Here is a 404-residue protein sequence, read N- to C-terminus: Glucose-1-phosphate adenylyltransferase (404 aa).

Alpha-D-glucose 1-phosphate-binding positions include Y99, G164, E179–K180, and S197.

It belongs to the bacterial/plant glucose-1-phosphate adenylyltransferase family. As to quaternary structure, homotetramer.

It catalyses the reaction alpha-D-glucose 1-phosphate + ATP + H(+) = ADP-alpha-D-glucose + diphosphate. The protein operates within glycan biosynthesis; glycogen biosynthesis. Functionally, involved in the biosynthesis of ADP-glucose, a building block required for the elongation reactions to produce glycogen. Catalyzes the reaction between ATP and alpha-D-glucose 1-phosphate (G1P) to produce pyrophosphate and ADP-Glc. The polypeptide is Glucose-1-phosphate adenylyltransferase (Nocardia farcinica (strain IFM 10152)).